The primary structure comprises 85 residues: N.vectensis toxin 6 (85 aa).

An N-terminal signal peptide occupies residues 1–20; the sequence is MISFKTVIVCLFLWVVIIGA. Intrachain disulfides connect cysteine 46/cysteine 82, cysteine 48/cysteine 71, and cysteine 64/cysteine 83.

Probable toxin. This chain is N.vectensis toxin 6, found in Nematostella vectensis (Starlet sea anemone).